The chain runs to 86 residues: Small ribosomal subunit protein bS16c (86 aa).

It belongs to the bacterial ribosomal protein bS16 family.

The protein resides in the plastid. It is found in the chloroplast. The sequence is that of Small ribosomal subunit protein bS16c from Liriodendron tulipifera (Tuliptree).